A 374-amino-acid chain; its full sequence is Speckle-type POZ protein (374 aa).

Positions 31–161 (KFSYMWTINN…DDKLTLFCEV (131 aa)) constitute an MATH domain. Positions 71–191 (VNPKGLDEES…PDCRLADELG (121 aa)) are required for nuclear localization. Residues 173 to 297 (QNTMNMVKVP…MCEDALCTSL (125 aa)) enclose the BTB domain. A homodimerization region spans residues 297–355 (LSVENAAEILILADLHSADQLKTQAVDFINYHASDVMETSGWKSMVASHPHLVAEAYRS).

This sequence belongs to the Tdpoz family. Homodimer. Part of cullin-RING-based BCR (BTB-CUL3-RBX1) E3 ubiquitin-protein ligase complexes that contain CUL3 and SPOP, plus a target protein.

It localises to the nucleus. It is found in the nucleus speckle. It functions in the pathway protein modification; protein ubiquitination. Functionally, component of a cullin-RING-based BCR (BTB-CUL3-RBX1) E3 ubiquitin-protein ligase complex that mediates the ubiquitination of target proteins, leading most often to their proteasomal degradation. The polypeptide is Speckle-type POZ protein (spop) (Danio rerio (Zebrafish)).